Reading from the N-terminus, the 357-residue chain is 3-isopropylmalate dehydrogenase (357 aa).

Residues arginine 97, arginine 107, arginine 135, and aspartate 224 each coordinate substrate. Aspartate 224, aspartate 248, and aspartate 252 together coordinate Mg(2+). 282–294 (GSAPDIAGKNIAN) is a binding site for NAD(+).

This sequence belongs to the isocitrate and isopropylmalate dehydrogenases family. LeuB type 1 subfamily. Homodimer. Requires Mg(2+) as cofactor. The cofactor is Mn(2+).

The protein localises to the cytoplasm. It carries out the reaction (2R,3S)-3-isopropylmalate + NAD(+) = 4-methyl-2-oxopentanoate + CO2 + NADH. The protein operates within amino-acid biosynthesis; L-leucine biosynthesis; L-leucine from 3-methyl-2-oxobutanoate: step 3/4. Functionally, catalyzes the oxidation of 3-carboxy-2-hydroxy-4-methylpentanoate (3-isopropylmalate) to 3-carboxy-4-methyl-2-oxopentanoate. The product decarboxylates to 4-methyl-2 oxopentanoate. The sequence is that of 3-isopropylmalate dehydrogenase from Prochlorococcus marinus (strain MIT 9312).